The primary structure comprises 493 residues: Galactose-1-phosphate uridylyltransferase 2 (493 aa).

This sequence belongs to the galactose-1-phosphate uridylyltransferase type 2 family.

It localises to the cytoplasm. The catalysed reaction is alpha-D-galactose 1-phosphate + UDP-alpha-D-glucose = alpha-D-glucose 1-phosphate + UDP-alpha-D-galactose. It participates in carbohydrate metabolism; galactose metabolism. The chain is Galactose-1-phosphate uridylyltransferase 2 (galT2) from Streptococcus pneumoniae (strain ATCC BAA-255 / R6).